A 360-amino-acid chain; its full sequence is Photosystem II protein D1 1 (360 aa).

The Cytoplasmic segment spans residues 2 to 31; that stretch reads TTTLQRRESANLWERFCNWVTSTDNRLYVG. Residues 32-53 traverse the membrane as a helical segment; sequence WFGVIMIPTLLAATICFVIAFI. The Lumenal segment spans residues 54–110; sequence AAPPVDIDGIREPVSGSLLYGNNIITGAVVPSSNAIGLHFYPIWEAASLDEWLYNGG. The chain crosses the membrane as a helical span at residues 111-132; that stretch reads PYQLIIFHFLLGASCYMGRQWE. His118 is a chlorophyll a binding site. Positions 126 and 130 each coordinate pheophytin a. The Cytoplasmic portion of the chain corresponds to 133–142; the sequence is LSYRLGMRPW. Residues 143-163 traverse the membrane as a helical segment; sequence ICVAYSAPLASAFAVFLIYPI. Residue Tyr147 coordinates pheophytin a. Over 164-191 the chain is Lumenal; the sequence is GQGSFSDGMPLGISGTFNFMIVFQAEHN. [CaMn4O5] cluster-binding residues include Asp170 and Glu189. The chain crosses the membrane as a helical span at residues 192 to 217; it reads ILMHPFHQLGVAGVFGGALFCAMHGS. His198 contacts chlorophyll a. A quinone is bound by residues His215 and 264 to 265; that span reads SF. Fe cation is bound at residue His215. The Cytoplasmic portion of the chain corresponds to 218-272; it reads LVTSSLIRETTETESANYGYKFGQEEETYNIVAAHGYFGRLIFQYASFNNSRSLH. His272 contributes to the Fe cation binding site. Residues 273–295 traverse the membrane as a helical segment; sequence FFLAAWPVVGVWFTALGISTMAF. Residues 296-344 are Lumenal-facing; the sequence is NLNGFNFNHSVIDAKGNVINTWADIINRANLGMEVMHERNAHNFPLDLA. Positions 332, 333, 342, and 344 each coordinate [CaMn4O5] cluster. A propeptide spanning residues 345 to 360 is cleaved from the precursor; the sequence is SAESAPVAMIAPSING.

It belongs to the reaction center PufL/M/PsbA/D family. PSII is composed of 1 copy each of membrane proteins PsbA, PsbB, PsbC, PsbD, PsbE, PsbF, PsbH, PsbI, PsbJ, PsbK, PsbL, PsbM, PsbT, PsbX, PsbY, PsbZ, Psb30/Ycf12, peripheral proteins PsbO, CyanoQ (PsbQ), PsbU, PsbV and a large number of cofactors. It forms dimeric complexes. Precursor protein interacts with Ycf48. Part of a photosystem II (PSII) assembly intermediate complex PSII-I; crystallized from a strain deleted of psbJ, it forms monomeric PSII before addition of the oxygen evolving complex. PSII-I includes 3 assembly factors not found in mature PSII (Psb27, Psb28 and Psb34). In PSII-I the C-terminus of D1 (this subunit) is already processed but not yet found at its final position. The cofactor is The D1/D2 heterodimer binds P680, chlorophylls that are the primary electron donor of PSII, and subsequent electron acceptors. It shares a non-heme iron and each subunit binds pheophytin, quinone, additional chlorophylls, carotenoids and lipids. D1 provides most of the ligands for the Mn4-Ca-O5 cluster of the oxygen-evolving complex (OEC). There is also a Cl(-1) ion associated with D1 and D2, which is required for oxygen evolution. PSII binds additional chlorophylls, carotenoids and specific lipids.. In terms of processing, C-terminally processed by CtpA; processing is essential to allow assembly of the oxygen-evolving complex and thus photosynthetic growth. Post-translationally, tyr-161 forms a radical intermediate that is referred to as redox-active TyrZ, YZ or Y-Z.

The protein localises to the cellular thylakoid membrane. The catalysed reaction is 2 a plastoquinone + 4 hnu + 2 H2O = 2 a plastoquinol + O2. Functionally, photosystem II (PSII) is a light-driven water:plastoquinone oxidoreductase that uses light energy to abstract electrons from H(2)O, generating O(2) and a proton gradient subsequently used for ATP formation. It consists of a core antenna complex that captures photons, and an electron transfer chain that converts photonic excitation into a charge separation. The D1/D2 (PsbA/PsbD) reaction center heterodimer binds P680, the primary electron donor of PSII as well as several subsequent electron acceptors. The sequence is that of Photosystem II protein D1 1 from Thermosynechococcus vestitus (strain NIES-2133 / IAM M-273 / BP-1).